The sequence spans 264 residues: Endoglucanase S (264 aa).

Positions 1-32 (MQTVNTQPHRIFRVLLPAVFSSLLLSSLTVSA) are cleaved as a signal peptide.

It belongs to the glycosyl hydrolase 12 (cellulase H) family.

It catalyses the reaction Endohydrolysis of (1-&gt;4)-beta-D-glucosidic linkages in cellulose, lichenin and cereal beta-D-glucans.. This is Endoglucanase S (celS) from Pectobacterium parmentieri.